The following is a 613-amino-acid chain: Nuclear receptor subfamily 1 group D member 1 (613 aa).

Polar residues predominate over residues 1–48; the sequence is MTTLDSNNNTGGVITYIGSSGSSPNRTSPESLYSDSSNGSFQSLTQGC. Positions 1-70 are required for phosphorylation by CSNK1E and cytoplasmic localization; that stretch reads MTTLDSNNNT…TQDPARSFGS (70 aa). The tract at residues 1-102 is disordered; the sequence is MTTLDSNNNT…SSFYNGSPPG (102 aa). The tract at residues 1–129 is modulating; sequence MTTLDSNNNT…TSNITKLNGM (129 aa). A crucial for activation of GJA1 region spans residues 49–285; the sequence is PTYFPPSPTG…PPRSPSPEPT (237 aa). A phosphoserine; by GSK3-beta mark is found at serine 55 and serine 59. A compositionally biased stretch (low complexity) spans 69–102; the sequence is GSIPPSLGDDGSPSSSSSSSSSSSSSFYNGSPPG. A DNA-binding region (nuclear receptor) is located at residues 130–206; it reads VLLCKVCGDV…VGMSRDAVRF (77 aa). 2 consecutive NR C4-type zinc fingers follow at residues 133-153 and 170-194; these read CKVC…CEGC and CLKN…FKKC. 2 positions are modified to N6-acetyllysine; by KAT5: lysine 192 and lysine 193. Residues 233–286 form a disordered region; the sequence is SSQCPLETPPTQHPTPGPMGPSPPPAPAPSPLVGFSQFPQQLTPPRSPSPEPTV. Residues 239-262 show a composition bias toward pro residues; sequence ETPPTQHPTPGPMGPSPPPAPAPS. Phosphothreonine; by CDK1 is present on threonine 275. The 329-residue stretch at 285–613 folds into the NR LBD domain; it reads TVEDVISQVA…KLLSFRVDAQ (329 aa). Heme is bound at residue cysteine 417. The residue at position 590 (lysine 590) is an N6-acetyllysine. Histidine 601 contacts heme.

The protein belongs to the nuclear hormone receptor family. NR1 subfamily. In terms of assembly, binds DNA as a monomer or a homodimer. Interacts with C1D, SP1 and ZNHIT1. Interacts with OPHN1 (via C-terminus). Interacts with PER2; the interaction associates PER2 to BMAL1 promoter region. Interacts with CRY1. Interacts with CCAR2. Interacts with NR2E3. Interacts with SIAH2. Interacts with FBXW7 and CDK1. Interacts with HUWE1. Interacts with NR0B2. Interacts with NFIL3. Interacts (via domain NR LBD) with HSP90AA1 and HSP90AB1. In terms of processing, ubiquitinated, leading to its proteasomal degradation. Ubiquitinated by the SCF(FBXW7) complex when phosphorylated by CDK1 leading to its proteasomal degradation. Ubiquitinated by SIAH2; leading to its proteasomal degradation. Rapidly ubiquitinated in response to inflammatory triggers and sumoylation is a prerequisite to its ubiquitination. Sumoylated by UBE2I, desumoylated by SENP1, and sumoylation is a prerequisite to its ubiquitination. Post-translationally, phosphorylated by CSNK1E; phosphorylation enhances its cytoplasmic localization. In terms of processing, undergoes lysosome-mediated degradation in a time-dependent manner in the liver. Expressed in all tissues and cell lines examined. Expressed at high levels in some squamous carcinoma cell lines.

It is found in the nucleus. The protein localises to the cytoplasm. Its subcellular location is the cell projection. It localises to the dendrite. The protein resides in the dendritic spine. Transcriptional repressor which coordinates circadian rhythm and metabolic pathways in a heme-dependent manner. Integral component of the complex transcription machinery that governs circadian rhythmicity and forms a critical negative limb of the circadian clock by directly repressing the expression of core clock components BMAL1, CLOCK and CRY1. Also regulates genes involved in metabolic functions, including lipid and bile acid metabolism, adipogenesis, gluconeogenesis and the macrophage inflammatory response. Acts as a receptor for heme which stimulates its interaction with the NCOR1/HDAC3 corepressor complex, enhancing transcriptional repression. Recognizes two classes of DNA response elements within the promoter of its target genes and can bind to DNA as either monomers or homodimers, depending on the nature of the response element. Binds as a monomer to a response element composed of the consensus half-site motif 5'-[A/G]GGTCA-3' preceded by an A/T-rich 5' sequence (RevRE), or as a homodimer to a direct repeat of the core motif spaced by two nucleotides (RevDR-2). Acts as a potent competitive repressor of ROR alpha (RORA) function and regulates the levels of its ligand heme by repressing the expression of PPARGC1A, a potent inducer of heme synthesis. Regulates lipid metabolism by repressing the expression of APOC3 and by influencing the activity of sterol response element binding proteins (SREBPs); represses INSIG2 which interferes with the proteolytic activation of SREBPs which in turn govern the rhythmic expression of enzymes with key functions in sterol and fatty acid synthesis. Regulates gluconeogenesis via repression of G6PC1 and PEPCK and adipocyte differentiation via repression of PPARG. Regulates glucagon release in pancreatic alpha-cells via the AMPK-NAMPT-SIRT1 pathway and the proliferation, glucose-induced insulin secretion and expression of key lipogenic genes in pancreatic-beta cells. Positively regulates bile acid synthesis by increasing hepatic expression of CYP7A1 via repression of NR0B2 and NFIL3 which are negative regulators of CYP7A1. Modulates skeletal muscle oxidative capacity by regulating mitochondrial biogenesis and autophagy; controls mitochondrial biogenesis and respiration by interfering with the STK11-PRKAA1/2-SIRT1-PPARGC1A signaling pathway. Represses the expression of SERPINE1/PAI1, an important modulator of cardiovascular disease and the expression of inflammatory cytokines and chemokines in macrophages. Represses gene expression at a distance in macrophages by inhibiting the transcription of enhancer-derived RNAs (eRNAs). Plays a role in the circadian regulation of body temperature and negatively regulates thermogenic transcriptional programs in brown adipose tissue (BAT); imposes a circadian oscillation in BAT activity, increasing body temperature when awake and depressing thermogenesis during sleep. In concert with NR2E3, regulates transcriptional networks critical for photoreceptor development and function. In addition to its activity as a repressor, can also act as a transcriptional activator. In the ovarian granulosa cells acts as a transcriptional activator of STAR which plays a role in steroid biosynthesis. In collaboration with SP1, activates GJA1 transcription in a heme-independent manner. Represses the transcription of CYP2B10, CYP4A10 and CYP4A14. Represses the transcription of CES2. Represses and regulates the circadian expression of TSHB in a NCOR1-dependent manner. Negatively regulates the protein stability of NR3C1 and influences the time-dependent subcellular distribution of NR3C1, thereby affecting its transcriptional regulatory activity. Plays a critical role in the circadian control of neutrophilic inflammation in the lung; under resting, non-stress conditions, acts as a rhythmic repressor to limit inflammatory activity whereas in the presence of inflammatory triggers undergoes ubiquitin-mediated degradation thereby relieving inhibition of the inflammatory response. Plays a key role in the circadian regulation of microglial activation and neuroinflammation; suppresses microglial activation through the NF-kappaB pathway in the central nervous system. Plays a role in the regulation of the diurnal rhythms of lipid and protein metabolism in the skeletal muscle via transcriptional repression of genes controlling lipid and amino acid metabolism in the muscle. In Bos taurus (Bovine), this protein is Nuclear receptor subfamily 1 group D member 1 (NR1D1).